The chain runs to 378 residues: Cytochrome b (378 aa).

A run of 4 helical transmembrane segments spans residues 34-54, 78-100, 113-133, and 179-199; these read FGSL…FLSM, WLLR…CHIG, TWNV…VGYV, and FFSF…VHLL. Heme b contacts are provided by histidine 84 and histidine 98. Positions 183 and 197 each coordinate heme b. Histidine 202 serves as a coordination point for a ubiquinone. 4 consecutive transmembrane segments (helical) span residues 225 to 245, 289 to 306, 313 to 342, and 350 to 369; these read YSTK…IVVL, LGGV…FCLP, KFRS…WIGM, and IFIG…LNPL.

Belongs to the cytochrome b family. As to quaternary structure, the main subunits of complex b-c1 are: cytochrome b, cytochrome c1 and the Rieske protein. Heme b is required as a cofactor.

Its subcellular location is the mitochondrion inner membrane. Component of the ubiquinol-cytochrome c reductase complex (complex III or cytochrome b-c1 complex) that is part of the mitochondrial respiratory chain. The b-c1 complex mediates electron transfer from ubiquinol to cytochrome c. Contributes to the generation of a proton gradient across the mitochondrial membrane that is then used for ATP synthesis. This is Cytochrome b (mt:Cyt-b) from Loxocorone allax (Goblet worm).